The chain runs to 1416 residues: DNA-directed RNA polymerase subunit beta' (1416 aa).

The Zn(2+) site is built by C71, C73, C86, and C89. Mg(2+) contacts are provided by D461, D463, and D465. Residues C815, C889, C896, and C899 each coordinate Zn(2+).

Belongs to the RNA polymerase beta' chain family. As to quaternary structure, the RNAP catalytic core consists of 2 alpha, 1 beta, 1 beta' and 1 omega subunit. When a sigma factor is associated with the core the holoenzyme is formed, which can initiate transcription. Mg(2+) serves as cofactor. Requires Zn(2+) as cofactor.

The enzyme catalyses RNA(n) + a ribonucleoside 5'-triphosphate = RNA(n+1) + diphosphate. Functionally, DNA-dependent RNA polymerase catalyzes the transcription of DNA into RNA using the four ribonucleoside triphosphates as substrates. The sequence is that of DNA-directed RNA polymerase subunit beta' from Haemophilus influenzae (strain PittGG).